Consider the following 661-residue polypeptide: MGSMERLRQLVDILNEYSYQYYVLDEPVVSDKEYDQLYDELVLLEKELNTVLEDSPTIRVGGDVLKNFKAHNHLAPLWSLDKCKTPEELISWDLRVRRLLEGSGVPIEYVMEYKFDGLTLNLTYNNGQLVQAATRGNGTTGEGILEQVKTIKTIPLTIPHKGRIEVQGEGLMGLSVLAAYNKTALEPLKNPRNAAAGALRNLDPKVTAKRKLSAFCYNVGFYEGIDFNTHMEILAFLKANKFPVSNYTKKFHTIHQVIEEIETIGEQVKSLDFLTDGLVIKVNHMEARRLLGYTQKFPRWAMAFKFEAEEMTTELKDVIWQVGRTGKLTPAAVLEPIDIGGVTVSRATLNNWEDIQRKKVKIGCRVWIRRSNDVIPEIMGSIEETLEGAMDIEKPQHCPACHSEVVERGAHIFCPNSLSCKPQLVSRIVHYASRDAMDIVGFSEKTAEQLFEELNLRDLADLYEIKYEDLIKLPRFGDKKARNLLEAIENSKNCKLDSFVYALGIPNVGRKTATDLAKHYKSFQAIQEAEFQELITLPDVGDIVAQSIIDFFEDEEIKKSVNRLINEGIRPLFKEVEQQENIFLGKTVVVTGTLEKYGRKEIKELLEKLGAKVTGSVSKNTDFLLAGEAAGSKLEKAMEIIASGVETSLRIISEAEFEAML.

Residues 31-35 (DKEYD), 79-80 (SL), and Glu112 each bind NAD(+). Catalysis depends on Lys114, which acts as the N6-AMP-lysine intermediate. Residues Arg135, Glu169, Lys281, and Lys305 each contribute to the NAD(+) site. Zn(2+) is bound by residues Cys398, Cys401, Cys414, and Cys420. The BRCT domain occupies 578-661 (QQENIFLGKT…ISEAEFEAML (84 aa)).

Belongs to the NAD-dependent DNA ligase family. LigA subfamily. Mg(2+) is required as a cofactor. Requires Mn(2+) as cofactor.

The enzyme catalyses NAD(+) + (deoxyribonucleotide)n-3'-hydroxyl + 5'-phospho-(deoxyribonucleotide)m = (deoxyribonucleotide)n+m + AMP + beta-nicotinamide D-nucleotide.. Functionally, DNA ligase that catalyzes the formation of phosphodiester linkages between 5'-phosphoryl and 3'-hydroxyl groups in double-stranded DNA using NAD as a coenzyme and as the energy source for the reaction. It is essential for DNA replication and repair of damaged DNA. The chain is DNA ligase from Alkaliphilus oremlandii (strain OhILAs) (Clostridium oremlandii (strain OhILAs)).